We begin with the raw amino-acid sequence, 134 residues long: Holo-[acyl-carrier-protein] synthase (134 aa).

Positions 8 and 59 each coordinate Mg(2+).

It belongs to the P-Pant transferase superfamily. AcpS family. Mg(2+) is required as a cofactor.

The protein resides in the cytoplasm. It catalyses the reaction apo-[ACP] + CoA = holo-[ACP] + adenosine 3',5'-bisphosphate + H(+). Its function is as follows. Transfers the 4'-phosphopantetheine moiety from coenzyme A to a Ser of acyl-carrier-protein. This chain is Holo-[acyl-carrier-protein] synthase, found in Zymomonas mobilis subsp. mobilis (strain ATCC 31821 / ZM4 / CP4).